A 1958-amino-acid polypeptide reads, in one-letter code: Probable Rho GTPase-activating protein CG5521 (1958 aa).

3 disordered regions span residues 1-21 (MFTK…QDSK), 400-424 (PPFL…RSQR), and 635-804 (GSVW…GIEG). Pro residues predominate over residues 400–414 (PPFLLEPNDDPPPPS). Residues 640–656 (GSGSNSAANGGSAASAA) are compositionally biased toward low complexity. 3 positions are modified to phosphoserine: serine 718, serine 764, and serine 767. The span at 758–774 (DLRRAMSLDSLARKGDA) shows a compositional bias: basic and acidic residues. The span at 775–785 (EETDSYQEGDN) shows a compositional bias: acidic residues. Phosphoserine occurs at positions 787, 791, 793, and 795. The span at 788-800 (GAGSRSPSPTASS) shows a compositional bias: polar residues. Tyrosine 980 carries the phosphotyrosine modification. Positions 1534-1568 (HSTQAPSPALRHASSNSSLQQPDQRSLHSTTASFD) are disordered. Polar residues predominate over residues 1546 to 1568 (ASSNSSLQQPDQRSLHSTTASFD). Serine 1551 carries the post-translational modification Phosphoserine. One can recognise a Rap-GAP domain in the interval 1612 to 1819 (LRNVDLQKCR…EERNRSLDSV (208 aa)). Residues 1903 to 1958 (ATGMSSASPRGPRKLGAPFKSVTKKHSLQHIAVGGGAGAGGDTPPESPTLPQRRFK) form a disordered region. Threonine 1945 carries the phosphothreonine modification. Serine 1949 is subject to Phosphoserine.

This Drosophila melanogaster (Fruit fly) protein is Probable Rho GTPase-activating protein CG5521.